The chain runs to 760 residues: Colleterpenol synthase (760 aa).

Residues 14-335 (ASSGLRSKFR…YTRRYPSKAD (322 aa)) form a terpene cyclase region. Asp95 lines the Mg(2+) pocket. A DDXXD 1 motif is present at residues 95–99 (DDYYD). The short motif at 233–241 (NDLYSWPKE) is the NSE/DTE element. Residues 336–759 (LRQPEVEFVD…LELVLRRLWI (424 aa)) are prenyltransferase. Residues 359–400 (EEKVVSESVESLPTTEVEDEFSSSDASPGSVDQAISTPPSTT) are disordered. The segment covering 391-400 (QAISTPPSTT) has biased composition (polar residues). Isopentenyl diphosphate contacts are provided by Lys477, Arg480, and His509. Mg(2+)-binding residues include Asp516 and Asp520. A DDXXD 2 motif is present at residues 516 to 520 (DDIED). Dimethylallyl diphosphate is bound at residue Arg525. Arg526 is an isopentenyl diphosphate binding site. Lys605, Thr606, Gln643, Asn650, Lys660, and Lys670 together coordinate dimethylallyl diphosphate.

The protein in the N-terminal section; belongs to the terpene synthase family. In the C-terminal section; belongs to the FPP/GGPP synthase family. As to quaternary structure, hexamer. Requires Mg(2+) as cofactor.

It carries out the reaction 5 isopentenyl diphosphate + dimethylallyl diphosphate = all-trans-hexaprenyl diphosphate + 5 diphosphate. The catalysed reaction is all-trans-hexaprenyl diphosphate + H2O = colleterpenol + diphosphate. Its function is as follows. Bifunctional terpene synthase that converts dimethylallyl diphosphate (DMAPP) and isopentenyl diphosphate (IPP) into colleterpenol as a single product. The C-terminal prenyltransferase (PT) domain of CgCS catalyzes formation of hexaprenyl diphosphate (HexPP), whereas the N-terminal terpene cyclase (TC) domain catalyzes the cyclization of HexPP to colleterpenol. The protein is Colleterpenol synthase of Colletotrichum gloeosporioides (Anthracnose fungus).